We begin with the raw amino-acid sequence, 98 residues long: Small ribosomal subunit protein eS24 (98 aa).

Belongs to the eukaryotic ribosomal protein eS24 family. Part of the 30S ribosomal subunit.

The protein is Small ribosomal subunit protein eS24 of Thermococcus kodakarensis (strain ATCC BAA-918 / JCM 12380 / KOD1) (Pyrococcus kodakaraensis (strain KOD1)).